Reading from the N-terminus, the 3704-residue chain is Fatty acid synthase 2 (3704 aa).

Positions 27-41 (AVSAHGSPPSSASPG) are enriched in low complexity. The disordered stretch occupies residues 27–52 (AVSAHGSPPSSASPGPDDKAFSVDGT). Positions 216–475 (ALFGGQGNNH…QARIPFSKRK (260 aa)) are acetyltransferase (AT) domain. An enoyl reductase (ER) domain region spans residues 639-887 (SRLLGKPPIM…LIASTQGCSD (249 aa)). A dehydratase (DH) domain region spans residues 1216-1709 (GEQPSWIRAL…VPGDQLSVQL (494 aa)). The MaoC-like domain maps to 1624–1730 (PKTNEPYSRA…VQIDASNQRG (107 aa)). The segment at 1747 to 2112 (YVFTGQGSQA…IEHVSEVTRS (366 aa)) is malonyl/palmitoyl transferase (MT/PT) domain. The Carrier domain occupies 2265 to 2343 (DERLDPLLTV…AALRPGYSGE (79 aa)). Position 2303 is an O-(pantetheine 4'-phosphoryl)serine (serine 2303). The tract at residues 2733–2969 (GLDVLLTGVG…LGLVEPEFAS (237 aa)) is ketoreductase (KR) domain. The region spanning 3176–3623 (QQEIELTHDL…QVGGIAMILH (448 aa)) is the Ketosynthase family 3 (KS3) domain. Catalysis depends on for beta-ketoacyl synthase activity residues cysteine 3359, histidine 3506, and histidine 3547.

In the N-terminal section; belongs to the fungal fatty acid synthetase subunit beta family. The protein in the C-terminal section; belongs to the thiolase-like superfamily. Fungal fatty acid synthetase subunit alpha family.

The protein operates within secondary metabolite biosynthesis. Its function is as follows. Fatty acid synthase; part of the gene cluster that mediates the biosynthesis of the glycolipid biosurfactant ustilagic acid (UA). UA is a secreted cellobiose glycolipid that is toxic for many microorganisms and confers biocontrol activity to U.maydis. UA consists of 15,16-dihydroxypalmitic or 2,15,16-trihydroxypalmitic acid, which is O-glycosidically linked to cellobiose at its terminal hydroxyl group. In addition, the cellobiose moiety is acetylated and acylated with a short-chain hydroxy fatty acid. UA biosynthesis starts with omega-hydroxylation of palmitic acid catalyzed by the cytochrome P450 monooxygenase cyp1. Terminal hydroxylation of palmitic acid precedes subterminal hydroxylation catalyzed by the cytochrome P450 monooxygenase cyp2. Sequential glucosylation of the hydroxy fatty acid is probably catalyzed by the glycosyltransferase ugt1. The cellobiose lipid is further decorated by acetylation of the proximal glucose residue and by acylation with a short-chain beta-hydroxy fatty acid at the distal glucose residue. The acyltransferase uat1 may be a good candidate for catalyzing either acetylation or acylation of the cellobiose lipid. The fatty acid synthase fas2 may be involved in synthesis of the carbon backbone of the short-chain beta-hydroxy fatty acid esterified to the cellobiose disaccharide. The secreted UA consists of a mixture of both alpha-hydroxylated and non-hydroxylated glycolipids; therefore, alpha-hydroxylation of the long-chain fatty, catalyzed by the fatty acid hydroxylase ahd1, occurs late in UA biosynthesis and may be the last step before secretion. In Mycosarcoma maydis (Corn smut fungus), this protein is Fatty acid synthase 2.